Reading from the N-terminus, the 167-residue chain is Centrin-3 (167 aa).

EF-hand domains are found at residues 25 to 60 (EQKQEIKDAFELFDTDKDEAIDYHELKVAMRALGFD), 61 to 96 (VKKADVLKILKDYDREATGKITFEDFNEVVTDWILE), 98 to 133 (DPHEEILKAFKLFDDDDSGKISLRNLRRVARELGEN), and 134 to 167 (MSDEELRAMIEEFDKDGDGEINQEEFIAIMTGDI). Position 135 is a phosphoserine (serine 135). Residues aspartate 147, aspartate 149, aspartate 151, glutamate 153, and glutamate 158 each coordinate Ca(2+).

It belongs to the centrin family. In terms of assembly, monomer. Component of the nuclear pore complex (NPC)-associated TREX-2 complex (transcription and export complex 2), composed of at least GANP, 2 copies of ENY2, PCID2, SEM1/DSS1, and either centrin CETN2 or centrin CETN3. The TREX-2 complex also associates with ALYREF/ALY and with the nucleoporin NUP153. Interacts with USP49.

The protein localises to the cytoplasm. Its subcellular location is the cytoskeleton. It localises to the microtubule organizing center. It is found in the centrosome. The protein resides in the nucleus. The protein localises to the nucleolus. Its subcellular location is the nucleus envelope. It localises to the nuclear pore complex. It is found in the centriole. In terms of biological role, plays a fundamental role in microtubule-organizing center structure and function. Functionally, as a component of the TREX-2 complex, involved in the export of mRNAs to the cytoplasm through the nuclear pores. This Homo sapiens (Human) protein is Centrin-3 (CETN3).